A 561-amino-acid polypeptide reads, in one-letter code: 2-methylisocitrate lyase, mitochondrial (561 aa).

A disordered region spans residues 154-177 (KAQSMHDRKQWDTRRKMSPDERSK). Over residues 157–177 (SMHDRKQWDTRRKMSPDERSK) the composition is skewed to basic and acidic residues. Residue cysteine 228 is part of the active site.

This sequence belongs to the isocitrate lyase/PEP mutase superfamily. Isocitrate lyase family. The cofactor is Mg(2+).

It is found in the mitochondrion matrix. It carries out the reaction (2S,3R)-3-hydroxybutane-1,2,3-tricarboxylate = pyruvate + succinate. It participates in organic acid metabolism; propanoate degradation. Functionally, component of the methylcitrate cycle that catalyzes the formation of pyruvate and succinate from 2-methylisocitrate during the metabolism of endogenous propionyl-CoA. Plays an important role for growth and development, but also in antagonism, root colonization and induction of defense responses in plants. The protein is 2-methylisocitrate lyase, mitochondrial of Hypocrea atroviridis (strain ATCC 20476 / IMI 206040) (Trichoderma atroviride).